A 131-amino-acid polypeptide reads, in one-letter code: Glycine cleavage system H protein (131 aa).

Residues 24-106 form the Lipoyl-binding domain; that stretch reads TVRIGITDYA…YGEGWLVDLE (83 aa). K65 carries the N6-lipoyllysine modification.

This sequence belongs to the GcvH family. As to quaternary structure, the glycine cleavage system is composed of four proteins: P, T, L and H. (R)-lipoate serves as cofactor.

The glycine cleavage system catalyzes the degradation of glycine. The H protein shuttles the methylamine group of glycine from the P protein to the T protein. The sequence is that of Glycine cleavage system H protein from Mycobacteroides abscessus (strain ATCC 19977 / DSM 44196 / CCUG 20993 / CIP 104536 / JCM 13569 / NCTC 13031 / TMC 1543 / L948) (Mycobacterium abscessus).